The following is a 1215-amino-acid chain: von Willebrand factor A domain-containing protein 5B1 (1215 aa).

Positions M1–S18 are cleaved as a signal peptide. Residues D19–S141 form the VIT domain. N132 is a glycosylation site (N-linked (GlcNAc...) asparagine). The region spanning E353–V532 is the VWFA domain. The interval S595–P674 is disordered. Composition is skewed to polar residues over residues G608–T621 and Y646–T667. Y879 carries the post-translational modification Phosphotyrosine. Disordered regions lie at residues G934–A953, Q964–S999, and S1100–S1121. Composition is skewed to polar residues over residues Q964 to P975, Q990 to S999, and S1100 to P1112.

Its subcellular location is the secreted. The chain is von Willebrand factor A domain-containing protein 5B1 (Vwa5b1) from Mus musculus (Mouse).